Reading from the N-terminus, the 105-residue chain is Small ribosomal subunit protein uS10 (105 aa).

This sequence belongs to the universal ribosomal protein uS10 family. Part of the 30S ribosomal subunit.

Its function is as follows. Involved in the binding of tRNA to the ribosomes. The protein is Small ribosomal subunit protein uS10 of Desulfotalea psychrophila (strain LSv54 / DSM 12343).